Here is a 435-residue protein sequence, read N- to C-terminus: Adenylosuccinate synthetase (435 aa).

GTP contacts are provided by residues Gly-11–Lys-17 and Gly-39–Thr-41. Asp-12 serves as the catalytic Proton acceptor. The Mg(2+) site is built by Asp-12 and Gly-39. IMP-binding positions include Asp-12–Lys-15, Asn-37–His-40, Thr-128, Arg-142, Gln-223, Thr-238, and Arg-302. The active-site Proton donor is His-40. Ser-298–Arg-304 lines the substrate pocket. Residues Arg-304, Lys-330 to Asp-332, and Ser-412 to Gly-414 contribute to the GTP site.

Belongs to the adenylosuccinate synthetase family. As to quaternary structure, homodimer. Requires Mg(2+) as cofactor.

It localises to the cytoplasm. It carries out the reaction IMP + L-aspartate + GTP = N(6)-(1,2-dicarboxyethyl)-AMP + GDP + phosphate + 2 H(+). It functions in the pathway purine metabolism; AMP biosynthesis via de novo pathway; AMP from IMP: step 1/2. In terms of biological role, plays an important role in the de novo pathway of purine nucleotide biosynthesis. Catalyzes the first committed step in the biosynthesis of AMP from IMP. This chain is Adenylosuccinate synthetase, found in Coxiella burnetii (strain Dugway 5J108-111).